Reading from the N-terminus, the 303-residue chain is Cytosolic Fe-S cluster assembly factor CFD1 (303 aa).

15-22 (GKGGVGKS) is an ATP binding site. 2 residues coordinate [4Fe-4S] cluster: cysteine 199 and cysteine 202.

This sequence belongs to the Mrp/NBP35 ATP-binding proteins family. NUBP2/CFD1 subfamily. Heterotetramer of 2 NBP35 and 2 CFD1 chains. Requires [4Fe-4S] cluster as cofactor.

It is found in the cytoplasm. Functionally, component of the cytosolic iron-sulfur (Fe/S) protein assembly (CIA) machinery. Required for maturation of extramitochondrial Fe-S proteins. The NBP35-CFD1 heterotetramer forms a Fe-S scaffold complex, mediating the de novo assembly of an Fe-S cluster and its transfer to target apoproteins. The chain is Cytosolic Fe-S cluster assembly factor CFD1 from Chaetomium globosum (strain ATCC 6205 / CBS 148.51 / DSM 1962 / NBRC 6347 / NRRL 1970) (Soil fungus).